Consider the following 177-residue polypeptide: SAYSvFN domain-containing protein 1 (177 aa).

At 1 to 100 (MADFQEQLRQ…CLKYTLWTVY (100 aa)) the chain is on the cytoplasmic side. Polar residues predominate over residues 57 to 70 (SENSQDEAVTSSES). A disordered region spans residues 57-85 (SENSQDEAVTSSESELVPEEQPTRSTDHH). Positions 101-121 (LLFWITLYVIAIKLSFGLVFL) form an intramembrane region, helical. Over 122–177 (MFSALFGIYFNTRTEPKKRNEMSAYSVFNKNCESIDGTLKAEQFEREIRYGSGSVR) the chain is Cytoplasmic.

It belongs to the SAYSD1 family.

It is found in the endoplasmic reticulum membrane. Functionally, ufmylation 'reader' component of a translocation-associated quality control pathway, a mechanism that takes place when a ribosome has stalled during translation, and which is required to degrade clogged substrates. Specifically recognizes and binds ufmylated ribosomes when a ribosome has stalled, promoting the transport of stalled nascent chain to lysosomes for degradation. This chain is SAYSvFN domain-containing protein 1, found in Drosophila melanogaster (Fruit fly).